The primary structure comprises 191 residues: UPF0312 protein Shewana3_1179 (191 aa).

The signal sequence occupies residues 1–22 (MKKQLLAALIGGSLLAPMAASA).

The protein belongs to the UPF0312 family. Type 1 subfamily.

It is found in the periplasm. The sequence is that of UPF0312 protein Shewana3_1179 from Shewanella sp. (strain ANA-3).